The following is a 343-amino-acid chain: Dihydroorotase (343 aa).

Residues His-13 and His-15 each coordinate Zn(2+). Residues 15-17 (HLR) and Asn-41 each bind substrate. Residues Lys-99, His-136, and His-174 each coordinate Zn(2+). Lys-99 bears the N6-carboxylysine mark. His-136 lines the substrate pocket. Substrate is bound at residue Leu-219. Residue Asp-247 coordinates Zn(2+). Asp-247 is a catalytic residue. 2 residues coordinate substrate: His-251 and Ala-263.

Belongs to the metallo-dependent hydrolases superfamily. DHOase family. Class II DHOase subfamily. As to quaternary structure, homodimer. Requires Zn(2+) as cofactor.

The enzyme catalyses (S)-dihydroorotate + H2O = N-carbamoyl-L-aspartate + H(+). The protein operates within pyrimidine metabolism; UMP biosynthesis via de novo pathway; (S)-dihydroorotate from bicarbonate: step 3/3. In terms of biological role, catalyzes the reversible cyclization of carbamoyl aspartate to dihydroorotate. This is Dihydroorotase from Alkalilimnicola ehrlichii (strain ATCC BAA-1101 / DSM 17681 / MLHE-1).